A 453-amino-acid chain; its full sequence is Phosphatidylserine decarboxylase proenzyme 1, mitochondrial (453 aa).

A mitochondrion-targeting transit peptide spans 1–29 (MKPRFPQNVYFLARYSYLRRFQHSQRRTF). The Mitochondrial matrix segment spans residues 30-74 (SSFLNNIRSNYSGARASPLGGSSGAGAGAGGGGTGDSKGNAFLVP). Residues 75–93 (GATMATILMLGALHARRLY) traverse the membrane as a helical segment. At 94 to 453 (EDKKIEEKRE…GQALGRWKEE (360 aa)) the chain is on the mitochondrial intermembrane side. Active-site charge relay system; for autoendoproteolytic cleavage activity residues include D199, H296, and S408. S408 (schiff-base intermediate with substrate; via pyruvic acid; for decarboxylase activity) is an active-site residue. Position 408 is a pyruvic acid (Ser); by autocatalysis (S408).

It belongs to the phosphatidylserine decarboxylase family. PSD-B subfamily. Eukaryotic type I sub-subfamily. Heterodimer of a large membrane-associated beta subunit and a small pyruvoyl-containing alpha subunit. It depends on pyruvate as a cofactor. Post-translationally, is synthesized initially as an inactive proenzyme. Formation of the active enzyme involves a self-maturation process in which the active site pyruvoyl group is generated from an internal serine residue via an autocatalytic post-translational modification. Two non-identical subunits are generated from the proenzyme in this reaction, and the pyruvate is formed at the N-terminus of the alpha chain, which is derived from the carboxyl end of the proenzyme. The autoendoproteolytic cleavage occurs by a canonical serine protease mechanism, in which the side chain hydroxyl group of the serine supplies its oxygen atom to form the C-terminus of the beta chain, while the remainder of the serine residue undergoes an oxidative deamination to produce ammonia and the pyruvoyl prosthetic group on the alpha chain. During this reaction, the Ser that is part of the protease active site of the proenzyme becomes the pyruvoyl prosthetic group, which constitutes an essential element of the active site of the mature decarboxylase. Expressed in roots, leaves, stems and flowers.

Its subcellular location is the mitochondrion. It is found in the mitochondrion inner membrane. It catalyses the reaction a 1,2-diacyl-sn-glycero-3-phospho-L-serine + H(+) = a 1,2-diacyl-sn-glycero-3-phosphoethanolamine + CO2. The protein operates within phospholipid metabolism; phosphatidylethanolamine biosynthesis; phosphatidylethanolamine from CDP-diacylglycerol: step 2/2. In terms of biological role, catalyzes the formation of phosphatidylethanolamine (PtdEtn) from phosphatidylserine (PtdSer). Plays a central role in phospholipid metabolism and in the interorganelle trafficking of phosphatidylserine. Contributes only to a minor proportion of PtdEtn production. This Arabidopsis thaliana (Mouse-ear cress) protein is Phosphatidylserine decarboxylase proenzyme 1, mitochondrial (PSD1).